The following is a 1179-amino-acid chain: MDSFDPQQLGLSPARFAGTFGSGAASVSCSRLRQVQSVLTQSSKSQPDGILCILGIDSRYNEGCRELANYLLFGLYSQNATDFEKTGFSEEILDDVILLIKSDSVHLYCNPVNYRYLLPYVAHWRNLHFHCMTENEYEDEEAAEEFKISSFVDMVRDCSRIGIPYSSQGHLQIFDMFVVEKWPIVQAFALEGIGGDGFFTMKYELQDVSLSLWNVYSRMDPASLENMLSEDLAVFEHQWTSFFANFDTEIPFLLELSESQAGEPFRSYFGHGMLSSHITENSPHRQPFVLFGNHSTRDNLSAGSFNFPSEGHLVRNTGPAGSFAKHMVAQCVSPKGPLACSRTYFFGATHVPYLGDNEKLPRTTEQIRLLSQIYAAVIEAVLAGIACYAKTCSLAKAKEVAEHTLESGLVFTELVPFKADLRSKVTFHIHAVNNQGRIVPLNNEDSLSFVKTARMTVYDIPDLLGGGGGGCLGSVVFSESFLTSRILVKEKDGTITPETSYIILTAAIPRFCSWLVEDSEIKLSEKTLQATKGDDCCLGTLLTGGKGAYLYSNSPQSGPEEGSAYFFSGGLLFSHRHHGSIVIAKEHVDAFSFYDGDSTSVVAALLIHFRSSILPHLPVHFHGSSNFLMLALFPKSKIYQAFYSEVFSPWQQQDNSGLSLKVIQEDGLSAEQKRLHSNAQKLFSALSPPAQDWSSPKLLSGKLPELDRFLQHFAIGSIGQEPVMRAHLVGLLQQPEMSPAHEVESDKVVISIVTGLPGCHASKLCAFLITLHKEYGRWMVYRQIMDSSECFHAAHFQKYLSSALEAQQNRSARQSAYIRKKTRLLVVLQGYTDVIDVVQALQTHPDPNVRSYFTIGAVTVCVEPLSCYMEHRFLFPKCLDQCSQGVVSNVVFTSHTAEQKHPLLVQLQTLIRASNPTAAFILAENGIVTRNEDIELILSENSFSSPQMLRSRYLLFPGWYEGKFDAGSVFPLMVQICVWFDCPLEKTRFVSRCRAIQSSIKPSPFSGNIYHILGKVKFSDSEKTMEVCHNTLTNSLTIVPVLEGPTPPPNSRSSPQDNGQPECYLVFIGCSLKEDSLKDWLRQSAKQRPQRKALKTRGMLTQQEIKNIHVKRHLDPLPAGYFYNGTQFVNFFGDKTDFHPLMDQFMNDYVEEANREIERYNRELEQQEYRDLFEQKPKP.

As to quaternary structure, interacts with ARL3.

In terms of biological role, may act as an effector for ARL3. The protein is Dynein axonemal assembly factor 9 of Mus musculus (Mouse).